The sequence spans 157 residues: Tripartite terminase subunit 2 (157 aa).

The segment at 1-69 (MSWAKQRVPF…DGEDGHALPD (69 aa)) is disordered. Positions 11–27 (LDDDDGEEENDVQDDVD) are enriched in acidic residues.

It belongs to the herpesviridae TRM2 protein family. Associates with TRM1 and TRM3 to form the tripartite terminase complex.

It is found in the host nucleus. Component of the molecular motor that translocates viral genomic DNA in empty capsid during DNA packaging. Forms a tripartite terminase complex together with TRM1 and TRM3 in the host cytoplasm. Once the complex reaches the host nucleus, it interacts with the capsid portal vertex. This portal forms a ring in which genomic DNA is translocated into the capsid. In Homo sapiens (Human), this protein is Tripartite terminase subunit 2.